A 391-amino-acid polypeptide reads, in one-letter code: DNA repair protein NreA (391 aa).

The segment at 6-20 adopts a C4-type zinc-finger fold; it reads CAECKGKLLCGRSKC. A PIP motif motif is present at residues 382–389; it reads QTSLASFF.

This sequence belongs to the Nre family. In terms of assembly, interacts with the DNA polymerase sliding clamp (PCNA) via the PIP (PCNA-interacting peptide) motif.

Involved in DNA damage repair. This chain is DNA repair protein NreA, found in Archaeoglobus fulgidus (strain ATCC 49558 / DSM 4304 / JCM 9628 / NBRC 100126 / VC-16).